A 150-amino-acid polypeptide reads, in one-letter code: uncharacterized protein (150 aa).

Positions 75–150 are disordered; sequence RAPQNPPPPG…LLDAVAAAET (76 aa). The segment covering 86–103 has biased composition (low complexity); it reads QRNLPLRRLPALPAAPEA.

This is an uncharacterized protein from Homo sapiens (Human).